Here is a 312-residue protein sequence, read N- to C-terminus: D-alanine--D-alanine ligase (312 aa).

One can recognise an ATP-grasp domain in the interval 108–308; sequence KLVWQQTGIP…YSELVVKVLS (201 aa). 138–193 contributes to the ATP binding site; it reads AAKLGVPLFVKPASEGSSVAVEKVKSADALPAALEEAAKHDKIVIVEKSIEGGGEY. Asp262, Glu275, and Asn277 together coordinate Mg(2+).

Belongs to the D-alanine--D-alanine ligase family. The cofactor is Mg(2+). It depends on Mn(2+) as a cofactor.

The protein resides in the cytoplasm. It catalyses the reaction 2 D-alanine + ATP = D-alanyl-D-alanine + ADP + phosphate + H(+). Its pathway is cell wall biogenesis; peptidoglycan biosynthesis. Cell wall formation. This is D-alanine--D-alanine ligase from Burkholderia pseudomallei (strain 668).